A 156-amino-acid polypeptide reads, in one-letter code: Large ribosomal subunit protein uL15 (156 aa).

Positions 1–11 are enriched in basic and acidic residues; sequence MKLNDLRDKPG. Residues 1 to 40 are disordered; the sequence is MKLNDLRDKPGSVKARKRVGRGIGSGTGKTGGRGVKGQKS. The segment covering 21-35 has biased composition (gly residues); that stretch reads RGIGSGTGKTGGRGV.

This sequence belongs to the universal ribosomal protein uL15 family. As to quaternary structure, part of the 50S ribosomal subunit.

Functionally, binds to the 23S rRNA. This is Large ribosomal subunit protein uL15 from Brucella anthropi (strain ATCC 49188 / DSM 6882 / CCUG 24695 / JCM 21032 / LMG 3331 / NBRC 15819 / NCTC 12168 / Alc 37) (Ochrobactrum anthropi).